Consider the following 232-residue polypeptide: Rhamnogalacturonan acetylesterase RhgT (232 aa).

S14 serves as the catalytic Nucleophile. Catalysis depends on residues E191 and H195.

It belongs to the 'GDSL' lipolytic enzyme family. As to quaternary structure, monomer.

With respect to regulation, almost completely inhibited by diethylpyrocarbonate at 5 mM and completely inhibited by phenylmethylsulfonyl fluoride (PMSF) at 50 mM. Dimethyl phosphite achieves only a 53% inhibition. Also inhibited by metal ions (magnesium, manganese and calcium) and chelating agent (EDTA) at the same level. Functionally, may play a role in the degradation of type I rhamnogalacturonan derived from plant cell walls. This enzyme has a broad substrate specificity, and shows strong preference for glucose pentaacetate, beta-naphthylacetate, and p-nitrophenyl acetate (pNPA). Also active toward acetylated xylan. The polypeptide is Rhamnogalacturonan acetylesterase RhgT (rhgT) (Bacillus subtilis (strain 168)).